The chain runs to 986 residues: Ephrin type-A receptor 4 (986 aa).

Positions 1-19 are cleaved as a signal peptide; that stretch reads MAGIFYFILFSFLFGICDA. The Extracellular portion of the chain corresponds to 20 to 547; that stretch reads VTGSRVYPAN…RIIGDGANST (528 aa). Residues 30 to 209 enclose the Eph LBD domain; sequence EVTLLDSRSV…FYKKCPLTVR (180 aa). Asn-235, Asn-340, and Asn-408 each carry an N-linked (GlcNAc...) asparagine glycan. 2 consecutive Fibronectin type-III domains span residues 328-439 and 440-537; these read PPSA…TNQA and APSS…TVPS. The helical transmembrane segment at 548–569 threads the bilayer; the sequence is VLLVSVSGSVVLVVILIAAFVI. Over 570–986 the chain is Cytoplasmic; that stretch reads SRRRSKYSKA…QQMHGRMVPV (417 aa). A phosphotyrosine; by autocatalysis mark is found at Tyr-596 and Tyr-602. Residues 621–882 form the Protein kinase domain; sequence IKIEKVIGVG…QIVNMLDKLI (262 aa). ATP contacts are provided by residues 627–635 and Lys-653; that span reads IGVGEFGEV. Asp-746 functions as the Proton acceptor in the catalytic mechanism. Tyr-779 and Tyr-928 each carry phosphotyrosine; by autocatalysis. The SAM domain maps to 911-975; that stretch reads SAVVSVGDWL…LSSVQAMRTQ (65 aa). The PDZ-binding motif lies at 984 to 986; sequence VPV.

The protein belongs to the protein kinase superfamily. Tyr protein kinase family. Ephrin receptor subfamily. Heterotetramer upon binding of the ligand. The heterotetramer is composed of an ephrin dimer and a receptor dimer. Oligomerization is probably required to induce biological responses. Interacts (phosphorylated at position Tyr-602) with FYN. Interacts (via PDZ motif) with SIPA1L1 (via PDZ domain); controls neuronal morphology through regulation of the RAP1 (RAP1A or RAP1B) and RAP2 (RAP2A, RAP2B or RAP2C) GTPases. Interacts with CDK5, CDK5R1 and NGEF; upon activation by EFNA1 induces NGEF phosphorylation by the kinase CDK5. Interacts with CHN1; effector of EPHA4 in axon guidance linking EPHA4 activation to RAC1 regulation. Forms a ternary complex composed of ADAM10, CADH1 and EPHA4; within the complex, CADH1 is cleaved by ADAM10 which disrupts adherens junctions. As to expression, expressed in inner and outer pillar cells of the organ of Corti (at protein level). Highest expression in the adult brain and retina and also detectable in kidney, lung, skeletal muscle and thymus. Not detected in heart and liver. Expressed in myogenic progenitor cells.

The protein localises to the cell membrane. The protein resides in the cell projection. Its subcellular location is the axon. It is found in the dendrite. It localises to the postsynaptic density membrane. The protein localises to the early endosome. The protein resides in the cell junction. Its subcellular location is the adherens junction. It catalyses the reaction L-tyrosyl-[protein] + ATP = O-phospho-L-tyrosyl-[protein] + ADP + H(+). Its function is as follows. Receptor tyrosine kinase which binds membrane-bound ephrin family ligands residing on adjacent cells, leading to contact-dependent bidirectional signaling into neighboring cells. The signaling pathway downstream of the receptor is referred to as forward signaling while the signaling pathway downstream of the ephrin ligand is referred to as reverse signaling. Highly promiscuous, it has the unique property among Eph receptors to bind and to be physiologically activated by both GPI-anchored ephrin-A and transmembrane ephrin-B ligands including EFNA1 and EFNB3. Upon activation by ephrin ligands, modulates cell morphology and integrin-dependent cell adhesion through regulation of the Rac, Rap and Rho GTPases activity. Plays an important role in the development of the nervous system controlling different steps of axonal guidance including the establishment of the corticospinal projections. May also control the segregation of motor and sensory axons during neuromuscular circuit developmen. In addition to its role in axonal guidance plays a role in synaptic plasticity. Activated by EFNA1 phosphorylates CDK5 at 'Tyr-15' which in turn phosphorylates NGEF regulating RHOA and dendritic spine morphogenesis. In the nervous system, also plays a role in repair after injury preventing axonal regeneration and in angiogenesis playing a role in central nervous system vascular formation. Additionally, its promiscuity makes it available to participate in a variety of cell-cell signaling regulating for instance the development of the thymic epithelium. During development of the cochlear organ of Corti, regulates pillar cell separation by forming a ternary complex with ADAM10 and CADH1 which facilitates the cleavage of CADH1 by ADAM10 and disruption of adherens junctions. Phosphorylates CAPRIN1, promoting CAPRIN1-dependent formation of a membraneless compartment. The chain is Ephrin type-A receptor 4 (Epha4) from Mus musculus (Mouse).